Reading from the N-terminus, the 217-residue chain is Uracil-DNA glycosylase (217 aa).

D62 acts as the Proton acceptor in catalysis.

It belongs to the uracil-DNA glycosylase (UDG) superfamily. UNG family.

The protein resides in the cytoplasm. It carries out the reaction Hydrolyzes single-stranded DNA or mismatched double-stranded DNA and polynucleotides, releasing free uracil.. Its function is as follows. Excises uracil residues from the DNA which can arise as a result of misincorporation of dUMP residues by DNA polymerase or due to deamination of cytosine. This Streptococcus pneumoniae (strain Hungary19A-6) protein is Uracil-DNA glycosylase.